The primary structure comprises 389 residues: MFDKGRSKEDVFRDLNVFHNMDMKYSSGRILGSMCTKPDPVGLEAYKMFIETNLGDPGLFKGTALMEQEVINSLGNLLHLKNPCGHIVTGGTEANIMAMCVAKYLYEEENEGTPELILPKSAHFSFKKVLSMLSVKPVYVPLNNEYKIDVTKLPDLITDNTMAMVGIAGTTELGLVDDIPEISKIAKSYGVYLHVDAALGGFIIPFLNYKNNNQLNFDFKCKGVSSITIDPHKMGLAPVPSGGIIFRKKKYLEKLSIKTPYLTKDKQTTIVGTRTGASTAATWTLLNYHGMEGYKKIVEKVINLTTYTYNKLNKNKHVTIIHKPELNIISFKVDNIDVDTLQKQLQAYGWIVSLAEYPHVIRLVLMPHIKKEHIDEFLVDLDIIIQKNR.

An N6-(pyridoxal phosphate)lysine modification is found at Lys233.

It belongs to the group II decarboxylase family. MfnA subfamily. It depends on pyridoxal 5'-phosphate as a cofactor.

The enzyme catalyses L-tyrosine + H(+) = tyramine + CO2. It carries out the reaction L-aspartate + H(+) = beta-alanine + CO2. Its pathway is cofactor biosynthesis; methanofuran biosynthesis. The protein operates within cofactor biosynthesis; coenzyme A biosynthesis. Catalyzes the decarboxylation of L-tyrosine to produce tyramine for methanofuran biosynthesis. Can also catalyze the decarboxylation of L-aspartate to produce beta-alanine for coenzyme A (CoA) biosynthesis. This Methanosphaera stadtmanae (strain ATCC 43021 / DSM 3091 / JCM 11832 / MCB-3) protein is Probable L-tyrosine/L-aspartate decarboxylase.